The sequence spans 128 residues: Small ribosomal subunit protein bS6 (128 aa).

The protein belongs to the bacterial ribosomal protein bS6 family.

In terms of biological role, binds together with bS18 to 16S ribosomal RNA. The chain is Small ribosomal subunit protein bS6 from Geotalea uraniireducens (strain Rf4) (Geobacter uraniireducens).